Here is a 127-residue protein sequence, read N- to C-terminus: uncharacterized protein (127 aa).

Residues 91 to 113 form a helical membrane-spanning segment; it reads IYLIVSIAVSILAIIAFFIFLML.

Its subcellular location is the membrane. This is an uncharacterized protein from Bacillus subtilis (strain 168).